The primary structure comprises 27 residues: uncharacterized protein (27 aa).

The protein localises to the mitochondrion. This is an uncharacterized protein from Emericella nidulans (Aspergillus nidulans).